A 275-amino-acid chain; its full sequence is Diaminopimelate epimerase (275 aa).

Positions 20 and 63 each coordinate substrate. Cys-72 serves as the catalytic Proton donor. Substrate-binding positions include 73 to 74 (GN), Asn-179, and 197 to 198 (ER). Cys-207 serves as the catalytic Proton acceptor. 208–209 (GT) is a substrate binding site.

It belongs to the diaminopimelate epimerase family. Homodimer.

Its subcellular location is the cytoplasm. The enzyme catalyses (2S,6S)-2,6-diaminopimelate = meso-2,6-diaminopimelate. Its pathway is amino-acid biosynthesis; L-lysine biosynthesis via DAP pathway; DL-2,6-diaminopimelate from LL-2,6-diaminopimelate: step 1/1. Functionally, catalyzes the stereoinversion of LL-2,6-diaminopimelate (L,L-DAP) to meso-diaminopimelate (meso-DAP), a precursor of L-lysine and an essential component of the bacterial peptidoglycan. The chain is Diaminopimelate epimerase from Chlamydia trachomatis serovar A (strain ATCC VR-571B / DSM 19440 / HAR-13).